The sequence spans 506 residues: ATP synthase subunit alpha (506 aa).

170–177 lines the ATP pocket; it reads GDRQTGKT.

The protein belongs to the ATPase alpha/beta chains family. As to quaternary structure, F-type ATPases have 2 components, CF(1) - the catalytic core - and CF(0) - the membrane proton channel. CF(1) has five subunits: alpha(3), beta(3), gamma(1), delta(1), epsilon(1). CF(0) has four main subunits: a(1), b(1), b'(1) and c(9-12).

It is found in the cellular thylakoid membrane. The enzyme catalyses ATP + H2O + 4 H(+)(in) = ADP + phosphate + 5 H(+)(out). Produces ATP from ADP in the presence of a proton gradient across the membrane. The alpha chain is a regulatory subunit. The chain is ATP synthase subunit alpha from Synechococcus sp. (strain CC9605).